Here is a 116-residue protein sequence, read N- to C-terminus: uncharacterized protein (116 aa).

This is an uncharacterized protein from Schizosaccharomyces pombe (strain 972 / ATCC 24843) (Fission yeast).